A 331-amino-acid polypeptide reads, in one-letter code: Probable cytosolic iron-sulfur protein assembly protein Ciao1 (331 aa).

WD repeat units follow at residues 12–51, 57–96, 97–136, 142–181, 188–227, 246–285, and 297–331; these read GHKGRIWGVAWHPKGNSFASCGEDKAIRIWSLSGNTWTTK, GHKRTIREVRWSPCGEYLASASFDATTAIWSKHECTATLE, GHENEVKSVSWSRSGGLLATCSRDKSVWIWEVAGDDEFEC, AHSQDVKRVVWHPTKEILASASYDNTIKMYAESALDSDWD, SHTSTVWSIDFDADGERLVSCSDDATLKIWRAYHPGNEAG, LHTRAIYDVSWCKLTGLIASACGDDAIRIFKESSDSKRDA, and AHEQDVNAVEWNPVNVGQLISCSDDGTIKIWKLQE.

This sequence belongs to the WD repeat CIA1 family.

Functionally, essential component of the cytosolic iron-sulfur (Fe/S) protein assembly machinery. Required for the maturation of extramitochondrial Fe/S proteins. The chain is Probable cytosolic iron-sulfur protein assembly protein Ciao1 from Drosophila mojavensis (Fruit fly).